We begin with the raw amino-acid sequence, 490 residues long: Ribulose bisphosphate carboxylase large chain (490 aa).

Positions 127 and 177 each coordinate substrate. Lys-179 functions as the Proton acceptor in the catalytic mechanism. Lys-181 contacts substrate. Mg(2+) contacts are provided by Lys-205, Asp-207, and Glu-208. Lys-205 is subject to N6-carboxylysine. His-297 (proton acceptor) is an active-site residue. Positions 298, 330, and 382 each coordinate substrate.

Belongs to the RuBisCO large chain family. Type I subfamily. In terms of assembly, heterohexadecamer of 8 large chains and 8 small chains. Mg(2+) serves as cofactor.

The protein localises to the plastid. It is found in the chloroplast. The catalysed reaction is 2 (2R)-3-phosphoglycerate + 2 H(+) = D-ribulose 1,5-bisphosphate + CO2 + H2O. The enzyme catalyses D-ribulose 1,5-bisphosphate + O2 = 2-phosphoglycolate + (2R)-3-phosphoglycerate + 2 H(+). RuBisCO catalyzes two reactions: the carboxylation of D-ribulose 1,5-bisphosphate, the primary event in carbon dioxide fixation, as well as the oxidative fragmentation of the pentose substrate in the photorespiration process. Both reactions occur simultaneously and in competition at the same active site. This chain is Ribulose bisphosphate carboxylase large chain, found in Thalassiosira nordenskioeldii (Marine diatom).